A 278-amino-acid polypeptide reads, in one-letter code: Large ribosomal subunit protein uL2 (278 aa).

Disordered regions lie at residues 28-58 and 223-278; these read TPEK…GGGH and GVVM…KNKR. Positions 43–53 are enriched in polar residues; the sequence is RNNQGRITTRH. Over residues 268-278 the composition is skewed to basic residues; that stretch reads IRRRKTGKNKR.

Belongs to the universal ribosomal protein uL2 family. As to quaternary structure, part of the 50S ribosomal subunit. Forms a bridge to the 30S subunit in the 70S ribosome.

Functionally, one of the primary rRNA binding proteins. Required for association of the 30S and 50S subunits to form the 70S ribosome, for tRNA binding and peptide bond formation. It has been suggested to have peptidyltransferase activity; this is somewhat controversial. Makes several contacts with the 16S rRNA in the 70S ribosome. The sequence is that of Large ribosomal subunit protein uL2 from Nocardioides sp. (strain ATCC BAA-499 / JS614).